The primary structure comprises 257 residues: NAD-capped RNA hydrolase NudC (257 aa).

Arg-69 lines the substrate pocket. The Zn(2+) site is built by Cys-98 and Cys-101. Glu-111 provides a ligand contact to substrate. Residues Cys-116 and Cys-119 each coordinate Zn(2+). Position 124 (Tyr-124) interacts with substrate. The Nudix hydrolase domain maps to 125-248; that stretch reads PQIAPCIIVA…TVARRLIEDT (124 aa). A divalent metal cation-binding residues include Ala-158, Glu-174, and Glu-178. Residues 159–180 carry the Nudix box motif; it reads GFVEVGETLEQAAAREIFEESR. 192–199 contributes to the substrate binding site; that stretch reads QPWPFPHS. Residue Glu-219 coordinates a divalent metal cation. Ala-241 is a substrate binding site.

The protein belongs to the Nudix hydrolase family. NudC subfamily. As to quaternary structure, homodimer. Mg(2+) is required as a cofactor. The cofactor is Mn(2+). Requires Zn(2+) as cofactor.

It catalyses the reaction a 5'-end NAD(+)-phospho-ribonucleoside in mRNA + H2O = a 5'-end phospho-adenosine-phospho-ribonucleoside in mRNA + beta-nicotinamide D-ribonucleotide + 2 H(+). The catalysed reaction is NAD(+) + H2O = beta-nicotinamide D-ribonucleotide + AMP + 2 H(+). The enzyme catalyses NADH + H2O = reduced beta-nicotinamide D-ribonucleotide + AMP + 2 H(+). Functionally, mRNA decapping enzyme that specifically removes the nicotinamide adenine dinucleotide (NAD) cap from a subset of mRNAs by hydrolyzing the diphosphate linkage to produce nicotinamide mononucleotide (NMN) and 5' monophosphate mRNA. The NAD-cap is present at the 5'-end of some mRNAs and stabilizes RNA against 5'-processing. Has preference for mRNAs with a 5'-end purine. Catalyzes the hydrolysis of a broad range of dinucleotide pyrophosphates. The polypeptide is NAD-capped RNA hydrolase NudC (Edwardsiella ictaluri (strain 93-146)).